Here is a 472-residue protein sequence, read N- to C-terminus: MMPRTIIEKIWDQHIVKHGEGKPDLLYIDLHLIHEVTSPQAFEGLRQKGRKVRRPQNTFATMDHNIPTVNRFEIKDEVAKRQVTALERNCEEFGVRLADLHSVDQGIVHVVGPELGLTLPGKTIVCGDSHTSTHGAFGALAFGIGTSEVEHVLSTQTLWQQRPKTLEVRVDGTLQKGVTAKDVILAVIGKYGVKFGTGYVIEYTGEVFRNMTMDERMTVCNMSIEAGARAGLIAPDEVTFEYCKNRKYTPKGEEFDKAVEEWKALRTDPGAVYDKSIVLDGNKISPMVTWGINPGMVLPVDSEVPAPESFSAEDDKKEAIRAYEYMGLTPHQKIEDIKVEHVFIGSCTNSRMTDLRQAADMIKGKKVADSVRAIVVPGSQSVKLQAEKEGLDQIFLEAGFEWRESGCSMCLSMNNDVVPEGERCASTSNRNFEGRQGKGARTHLVSPAMAAMAAIHGHFVDVRKFYQEKTVV.

[4Fe-4S] cluster is bound by residues Cys-347, Cys-407, and Cys-410.

It belongs to the aconitase/IPM isomerase family. LeuC type 1 subfamily. As to quaternary structure, heterodimer of LeuC and LeuD. [4Fe-4S] cluster is required as a cofactor.

It carries out the reaction (2R,3S)-3-isopropylmalate = (2S)-2-isopropylmalate. Its pathway is amino-acid biosynthesis; L-leucine biosynthesis; L-leucine from 3-methyl-2-oxobutanoate: step 2/4. Its function is as follows. Catalyzes the isomerization between 2-isopropylmalate and 3-isopropylmalate, via the formation of 2-isopropylmaleate. The chain is 3-isopropylmalate dehydratase large subunit from Bacillus subtilis (strain 168).